The primary structure comprises 1683 residues: Genome polyprotein (1683 aa).

Over 1–445 (MRCIGISNRD…LHQVFGAIYG (445 aa)) the chain is Extracellular. Intrachain disulfides connect cysteine 3-cysteine 30, cysteine 60-cysteine 121, cysteine 74-cysteine 105, and cysteine 92-cysteine 116. A glycan (N-linked (GlcNAc...) asparagine; by host) is linked at asparagine 67. The tract at residues 98-111 (DRGWGNGCGLFGKG) is fusion peptide. The N-linked (GlcNAc...) asparagine; by host glycan is linked to asparagine 153. Cystine bridges form between cysteine 185-cysteine 285 and cysteine 302-cysteine 333. Residues 446–466 (AAFSGVSWTMKILIGVIITWI) traverse the membrane as a helical segment. Over 467–472 (GMNSRS) the chain is Cytoplasmic. The chain crosses the membrane as a helical span at residues 473-493 (TSLSVSLVLVGIVTLYLGVMV). Topologically, residues 494–915 (QADSGCVVSW…MVGATMTDDI (422 aa)) are extracellular. 6 cysteine pairs are disulfide-bonded: cysteine 499–cysteine 510, cysteine 550–cysteine 638, cysteine 674–cysteine 718, cysteine 775–cysteine 824, cysteine 786–cysteine 808, and cysteine 807–cysteine 811. N-linked (GlcNAc...) asparagine; by host glycosylation occurs at asparagine 702. The chain crosses the membrane as a helical span at residues 916-940 (GMGVTYLALLAAFRVRPTFAAGLLL). Residues 941 to 946 (RKLTSK) are Cytoplasmic-facing. A helical membrane pass occupies residues 947–965 (ELMMTTIGIVLLSQSSIPE). At 966–989 (TILELTDALALGMMVLKMVRNMEK) the chain is on the lumenal side. The chain crosses the membrane as a helical span at residues 990-1010 (YQLAVTIMAILCVPNAVILQN). Alanine 1011 is a topological domain (cytoplasmic). The helical transmembrane segment at 1012–1030 (WKVSCTILAVVSVSPLLLT) threads the bilayer. Residues 1031 to 1037 (SSQQKAD) are Lumenal-facing. Residues 1038–1058 (WIPLALTIKGLNPTAIFLTTL) form a helical membrane-spanning segment. Residues 1059 to 1683 (SRTSKKRAGV…EFKEFAAGRK (625 aa)) lie on the Cytoplasmic side of the membrane. The Peptidase S7 domain maps to 1066-1243 (AGVLWDVPSP…EKSIEDNPEI (178 aa)). Residues histidine 1116, aspartate 1140, and serine 1200 each act as charge relay system; for serine protease NS3 activity in the active site. Residues 1245 to 1401 (DDIFRKRRLT…QSNAPIMDEE (157 aa)) enclose the Helicase ATP-binding domain. The segment at 1249 to 1252 (RKRR) is important for RNA-binding. Residue 1258–1265 (LHPGAGKT) coordinates ATP. Positions 1349 to 1352 (DEAH) match the DEAH box motif. A Helicase C-terminal domain is found at 1411-1582 (SGHEWVTDFK…IFEPEREKVD (172 aa)).

In terms of assembly, capsid protein C: Homodimer. Interacts (via N-terminus) with host EXOC1 (via C-terminus); this interaction results in EXOC1 degradation through the proteasome degradation pathway. Protein prM: Forms heterodimers with envelope protein E in the endoplasmic reticulum and Golgi. Homodimer; in the endoplasmic reticulum and Golgi. Interacts with protein prM. Interacts with non-structural protein 1. As to quaternary structure, homodimer; Homohexamer when secreted. Interacts with envelope protein E. In terms of assembly, interacts (via N-terminus) with serine protease NS3. Non-structural protein 2B: Forms a heterodimer with serine protease NS3. May form homooligomers. Forms a heterodimer with NS2B. Interacts with NS4B. Interacts with unphosphorylated RNA-directed RNA polymerase NS5; this interaction stimulates RNA-directed RNA polymerase NS5 guanylyltransferase activity. Interacts with host SHFL. Specific enzymatic cleavages in vivo yield mature proteins. Cleavages in the lumen of endoplasmic reticulum are performed by host signal peptidase, wereas cleavages in the cytoplasmic side are performed by the Serine protease NS3. Signal cleavage at the 2K-4B site requires a prior NS3 protease-mediated cleavage at the 4A-2K site. Post-translationally, N-glycosylated. The excreted form is glycosylated and this is required for efficient secretion of the protein from infected cells. In terms of processing, N-glycosylated. Specific enzymatic cleavages in vivo yield mature proteins. Cleavages in the lumen of endoplasmic reticulum are performed by host signal peptidase, wereas cleavages in the cytoplasmic side are performed by serine protease NS3. Signal cleavage at the 2K-4B site requires a prior NS3 protease-mediated cleavage at the 4A-2K site.

It localises to the virion membrane. The protein localises to the host endoplasmic reticulum membrane. It is found in the secreted. The catalysed reaction is Selective hydrolysis of -Xaa-Xaa-|-Yaa- bonds in which each of the Xaa can be either Arg or Lys and Yaa can be either Ser or Ala.. The enzyme catalyses a ribonucleoside 5'-triphosphate + H2O = a ribonucleoside 5'-diphosphate + phosphate + H(+). It carries out the reaction ATP + H2O = ADP + phosphate + H(+). Binds to host cell surface receptor and mediates fusion between viral and cellular membranes. Envelope protein is synthesized in the endoplasmic reticulum in the form of heterodimer with protein prM. They play a role in virion budding in the ER, and the newly formed immature particle is covered with 60 spikes composed of heterodimer between precursor prM and envelope protein E. The virion is transported to the Golgi apparatus where the low pH causes dissociation of PrM-E heterodimers and formation of E homodimers. prM-E cleavage is inefficient, and many virions are only partially matured. These uncleaved prM would play a role in immune evasion. Functionally, involved in immune evasion, pathogenesis and viral replication. Once cleaved off the polyprotein, is targeted to three destinations: the viral replication cycle, the plasma membrane and the extracellular compartment. Essential for viral replication. Required for formation of the replication complex and recruitment of other non-structural proteins to the ER-derived membrane structures. Excreted as a hexameric lipoparticle that plays a role against host immune response. Antagonizing the complement function. Binds to the host macrophages and dendritic cells. Inhibits signal transduction originating from Toll-like receptor 3 (TLR3). In terms of biological role, disrupts the host endothelial glycocalyx layer of host pulmonary microvascular endothelial cells, inducing degradation of sialic acid and shedding of heparan sulfate proteoglycans. NS1 induces expression of sialidases, heparanase, and activates cathepsin L, which activates heparanase via enzymatic cleavage. These effects are probably linked to the endothelial hyperpermeability observed in severe dengue disease. Its function is as follows. Component of the viral RNA replication complex that functions in virion assembly and antagonizes the host immune response. Serine protease subunit NS2B: Required cofactor for the serine protease function of NS3. May have membrane-destabilizing activity and form viroporins. Functionally, displays three enzymatic activities: serine protease, NTPase and RNA helicase. NS3 serine protease, in association with NS2B, performs its autocleavage and cleaves the polyprotein at dibasic sites in the cytoplasm: C-prM, NS2A-NS2B, NS2B-NS3, NS3-NS4A, NS4A-2K and NS4B-NS5. NS3 RNA helicase binds RNA and unwinds dsRNA in the 3' to 5' direction. The protein is Genome polyprotein of Aedimorphus (Red guenon).